A 221-amino-acid polypeptide reads, in one-letter code: Casparian strip membrane protein 2 (221 aa).

The disordered stretch occupies residues 1–21; sequence MEKSEATTIEIGETSRESKGK. Residues 1-41 are Cytoplasmic-facing; the sequence is MEKSEATTIEIGETSRESKGKTPLLAEVEQTARTAGSYRRG. Residues 42–62 form a helical membrane-spanning segment; the sequence is VAIFDLILRVSAATSALAATI. The Extracellular portion of the chain corresponds to 63–89; sequence TMGTTEQTLPFFTQFFQFQASYDDLPA. The chain crosses the membrane as a helical span at residues 90 to 110; the sequence is FTFFVIALSIVTGYLVLSVPF. Over 111-131 the chain is Cytoplasmic; the sequence is SVVCIAQPLAAVPRLLLIVCD. A helical transmembrane segment spans residues 132–152; sequence TLTVTLATAAASSSAAIVYLA. Residues 153–221 lie on the Extracellular side of the membrane; sequence HNGNADANWL…HYWDRRWCEI (69 aa).

The protein belongs to the Casparian strip membrane proteins (CASP) family. As to quaternary structure, homodimer and heterodimers.

The protein resides in the cell membrane. Regulates membrane-cell wall junctions and localized cell wall deposition. Required for establishment of the Casparian strip membrane domain (CSD) and the subsequent formation of Casparian strips, a cell wall modification of the root endodermis that determines an apoplastic barrier between the intraorganismal apoplasm and the extraorganismal apoplasm and prevents lateral diffusion. The chain is Casparian strip membrane protein 2 from Erythranthe guttata (Yellow monkey flower).